Reading from the N-terminus, the 600-residue chain is Leiomodin-1 (600 aa).

A Phosphoserine modification is found at serine 12. 3 disordered regions span residues 38–61, 80–324, and 472–573; these read VVDPDGSVPVGLRQRNQTEKQSTG, MQRE…PLER, and DKQR…QEKN. Composition is skewed to basic and acidic residues over residues 80–127, 134–240, 247–256, 263–292, and 472–497; these read MQRE…EPKR, FSRD…EKMK, DMKKEDEKVK, DTKKDDEKVKKNEPLHEKEAKDDSKTKTPE, and DKQRQKRLQEQRQAQEAKGEKKDLLE. A phosphoserine mark is found at serine 85 and serine 135. Tandem repeats lie at residues 165–180, 181–196, 197–212, 213–228, 229–244, 245–260, 261–276, and 277–293. The tract at residues 165-293 is 8 X approximate tandem repeats; the sequence is AAVDKKEAGK…DDSKTKTPEK (129 aa). A 5 X 4 AA approximate tandem repeats region spans residues 508–527; that stretch reads SPKPSPQPSPKPSPKNSPKK. Pro residues-rich tracts occupy residues 510–522 and 532–543; these read KPSPQPSPKPSPK and AAPPPPPPPLAP. Position 555 is a phosphoserine (serine 555). A WH2 domain is found at 574–593; it reads SRDQLLAAIRSSNLKQLKKV.

The protein belongs to the tropomodulin family. In terms of tissue distribution, detected in lung vascular smooth muscle (at protein level). Detected in thyroid and extraocular smooth muscle, but not skeletal muscle. Detected in heart, aorta, skeletal muscle, colon, urinary bladder, uterus, stomach, and small intestine.

The protein resides in the cytoplasm. It is found in the myofibril. The protein localises to the sarcomere. Its subcellular location is the cytoskeleton. Its function is as follows. Required for proper contractility of visceral smooth muscle cells. Mediates nucleation of actin filaments. The sequence is that of Leiomodin-1 (LMOD1) from Homo sapiens (Human).